A 442-amino-acid chain; its full sequence is Serum response factor-binding protein 1 (442 aa).

Coiled coils occupy residues 55–77 (EDAL…AMKE) and 118–140 (LLKR…RQNA). 2 disordered regions span residues 137–336 (RQNA…LETH) and 358–442 (FHSL…TFDD). 2 stretches are compositionally biased toward basic and acidic residues: residues 149 to 159 (ASKESQCEDIP) and 167 to 188 (ESQH…DPTT). Lys-202 participates in a covalent cross-link: Glycyl lysine isopeptide (Lys-Gly) (interchain with G-Cter in SUMO2). Ser-215 is modified (phosphoserine). A compositionally biased stretch (polar residues) spans 237-247 (GNHSQGKASTR). A compositionally biased stretch (acidic residues) spans 266-278 (VSEEEKEYFDDST). Residues Ser-277, Ser-292, and Ser-294 each carry the phosphoserine modification. Lys-329 is covalently cross-linked (Glycyl lysine isopeptide (Lys-Gly) (interchain with G-Cter in SUMO2)). Residue Ser-362 is modified to Phosphoserine. Positions 367-382 (SRRDPREQAPKNKAPD) are enriched in basic and acidic residues.

Interacts with SRF. Forms complexes with SRF and SRF cofactors ARID2, MYOCD and NKX2-5. Interacts with the N-terminus of SLC2A4.

The protein resides in the cytoplasm. It localises to the perinuclear region. Functionally, may be involved in regulating transcriptional activation of cardiac genes during the aging process. May play a role in biosynthesis and/or processing of SLC2A4 in adipose cells. This Rattus norvegicus (Rat) protein is Serum response factor-binding protein 1.